The following is a 517-amino-acid chain: Maturase K (517 aa).

This sequence belongs to the intron maturase 2 family. MatK subfamily.

The protein resides in the plastid. It is found in the chloroplast. Functionally, usually encoded in the trnK tRNA gene intron. Probably assists in splicing its own and other chloroplast group II introns. This chain is Maturase K, found in Juncus effusus (Soft rush).